An 89-amino-acid chain; its full sequence is Porphobilinogen deaminase (89 aa).

This sequence belongs to the HMBS family. As to quaternary structure, monomer. Dipyrromethane is required as a cofactor.

It carries out the reaction 4 porphobilinogen + H2O = hydroxymethylbilane + 4 NH4(+). Its pathway is porphyrin-containing compound metabolism; protoporphyrin-IX biosynthesis; coproporphyrinogen-III from 5-aminolevulinate: step 2/4. In terms of biological role, tetrapolymerization of the monopyrrole PBG into the hydroxymethylbilane pre-uroporphyrinogen in several discrete steps. This chain is Porphobilinogen deaminase (hemC), found in Dickeya chrysanthemi (Pectobacterium chrysanthemi).